The following is a 337-amino-acid chain: DNA-directed RNA polymerase subunit alpha (337 aa).

Residues 1 to 233 form an alpha N-terminal domain (alpha-NTD) region; it reads MVREEVAVST…DLFIPFLHAE (233 aa). An alpha C-terminal domain (alpha-CTD) region spans residues 266-337; the sequence is GIALKCIFID…FTIDLPKNKF (72 aa).

The protein belongs to the RNA polymerase alpha chain family. In plastids the minimal PEP RNA polymerase catalytic core is composed of four subunits: alpha, beta, beta', and beta''. When a (nuclear-encoded) sigma factor is associated with the core the holoenzyme is formed, which can initiate transcription.

The protein resides in the plastid. It is found in the chloroplast. The enzyme catalyses RNA(n) + a ribonucleoside 5'-triphosphate = RNA(n+1) + diphosphate. Functionally, DNA-dependent RNA polymerase catalyzes the transcription of DNA into RNA using the four ribonucleoside triphosphates as substrates. This Liriodendron tulipifera (Tuliptree) protein is DNA-directed RNA polymerase subunit alpha.